The primary structure comprises 88 residues: Homeobox protein knotted-1-like 3 (88 aa).

The region spanning 4–24 (ELKKQLLRKYSGCLGNLRKEL) is the ELK domain. The homeobox; TALE-type DNA-binding region spans 25–88 (CKKRKKDKLP…NQRKRHWKPS (64 aa)).

It belongs to the TALE/KNOX homeobox family. In terms of tissue distribution, strongly expressed in ear inflorescence primordia and shoot meristem. Weakly expressed in embryos. Absent from leaves.

The protein localises to the nucleus. Its function is as follows. Probably binds to the DNA sequence 5'-TGAC-3'. This chain is Homeobox protein knotted-1-like 3 (KNOX3), found in Zea mays (Maize).